A 3164-amino-acid polypeptide reads, in one-letter code: Genome polyprotein (3164 aa).

The region spanning 219–362 (KMNDQGVDML…RTMSHKIVHF (144 aa)) is the Peptidase S30 domain. Active-site for P1 proteinase activity residues include histidine 270, aspartate 279, and serine 313. Residues 414 to 417 (KITC) carry the Involved in interaction with stylet and aphid transmission motif. The short motif at 672-674 (PTK) is the Involved in virions binding and aphid transmission element. Residues 698 to 820 (MYIAKEGYCY…ESSLKHYRVG (123 aa)) enclose the Peptidase C6 domain. Active-site for helper component proteinase activity residues include cysteine 706 and histidine 779. One can recognise a Helicase ATP-binding domain in the interval 1300 to 1452 (KIAHESDKDI…TQYPVSISTE (153 aa)). 1313-1320 (GAVGSGKS) is an ATP binding site. Residues 1402–1405 (DECH) carry the DEAH box motif. Positions 1471-1630 (DVISKGDNIL…GLPVITNNVS (160 aa)) constitute a Helicase C-terminal domain. At 1872-1889 (NTSDMSKFLKLKGKWNKT) the chain is on the cytoplasmic side. Residues 1890–1910 (LITRDVLVLCGVLGGGLWMVI) traverse the membrane as a helical segment. The Lumenal segment spans residues 1911–1924 (QHLRSKMSEPVTHE). Residues 1965 to 1972 (KKGKSKGR) carry the Nuclear localization signal motif. Tyrosine 1987 carries the post-translational modification O-(5'-phospho-RNA)-tyrosine. The region spanning 2117–2335 (SNSMFRGLRD…ISWGSLNIQA (219 aa)) is the Peptidase C4 domain. Catalysis depends on for nuclear inclusion protein A activity residues histidine 2162, aspartate 2197, and cysteine 2267. The RdRp catalytic domain maps to 2601–2725 (WVYCDADGSQ…SVHPEYEYIL (125 aa)). The segment at 2884–2935 (GLTDEQKQAEKEKKEREKAEKERERQKQLALKKGKDVAQEEGKRDKEVNAGT) is disordered. A compositionally biased stretch (basic and acidic residues) spans 2887 to 2931 (DEQKQAEKEKKEREKAEKERERQKQLALKKGKDVAQEEGKRDKEV). The residue at position 3147 (threonine 3147) is a Phosphothreonine.

Belongs to the potyviridae genome polyprotein family. Interacts with host eIF4E protein (via cap-binding region); this interaction mediates the translation of the VPg-viral RNA conjugates. Part of a complex that comprises VPg, RNA, host EIF4E and EIF4G; this interaction mediates the translation of the VPg-viral RNA conjugates. As to quaternary structure, interacts, via N-terminal region, with host Sec24a protein in COPII-coated vesicles. This binding triggers the formation of host endoplasmic reticulum (ER)-derived viral vesicles involved in cell-to-cell viral movement. VPg is uridylylated by the polymerase and is covalently attached to the 5'-end of the genomic RNA. This uridylylated form acts as a nucleotide-peptide primer for the polymerase. In terms of processing, potyviral RNA is expressed as two polyproteins which undergo post-translational proteolytic processing. Genome polyprotein is processed by NIa-pro, P1 and HC-pro proteinases resulting in the production of at least ten individual proteins. P3N-PIPO polyprotein is cleaved by P1 and HC-pro proteinases resulting in the production of three individual proteins. The P1 proteinase and the HC-pro cleave only their respective C-termini autocatalytically. 6K1 is essential for proper proteolytic separation of P3 from CI.

The protein localises to the host cytoplasm. Its subcellular location is the host nucleus. The protein resides in the host cytoplasmic vesicle. It localises to the host membrane. It is found in the virion. The catalysed reaction is RNA(n) + a ribonucleoside 5'-triphosphate = RNA(n+1) + diphosphate. It catalyses the reaction Hydrolyzes glutaminyl bonds, and activity is further restricted by preferences for the amino acids in P6 - P1' that vary with the species of potyvirus, e.g. Glu-Xaa-Xaa-Tyr-Xaa-Gln-|-(Ser or Gly) for the enzyme from tobacco etch virus. The natural substrate is the viral polyprotein, but other proteins and oligopeptides containing the appropriate consensus sequence are also cleaved.. The enzyme catalyses Hydrolyzes a Gly-|-Gly bond at its own C-terminus, commonly in the sequence -Tyr-Xaa-Val-Gly-|-Gly, in the processing of the potyviral polyprotein.. In terms of biological role, cysteine protease that cleaves a Gly-Gly dipeptide at its own C-terminus. Required for aphid transmission and also has proteolytic activity. Interacts with virions and aphid stylets. Acts as a suppressor of RNA-mediated gene silencing, also known as post-transcriptional gene silencing (PTGS), a mechanism of plant viral defense that limits the accumulation of viral RNAs. May have RNA-binding activity. Its function is as follows. Has helicase activity. It may be involved in replication. Functionally, indispensable for virus replication. Reduces the abundance of host transcripts related to jasmonic acid biosynthesis therefore altering the host defenses. In order to increase its own stability, decreases host protein degradation pathways. Responsible for the formation of peripheral motile host endoplasmic reticulum (ER)-derived viral vesicles called 'viral factories', seat of the viral RNA (vRNA) replication and carrying vRNA to plasmodesmata for delivery into adjacent non-infected cells; this process relies on host Sec24a-binding. In terms of biological role, mediates the cap-independent, EIF4E-dependent translation of viral genomic RNAs. Binds to the cap-binding site of host EIF4E and thus interferes with the host EIF4E-dependent mRNA export and translation. VPg-RNA directly binds EIF4E and is a template for transcription. Also forms trimeric complexes with EIF4E-EIF4G, which are templates for translation. Its function is as follows. Has RNA-binding and proteolytic activities. Functionally, RNA-dependent RNA polymerase that ensures transcription and replication of viral RNA (vRNA). Involved in aphid transmission, cell-to-cell and systemis movement, encapsidation of the viral RNA and in the regulation of viral RNA amplification. The protein is Genome polyprotein of Turnip mosaic virus (strain Japanese) (TuMV).